We begin with the raw amino-acid sequence, 550 residues long: Integral membrane protein DGCR2/IDD (550 aa).

The first 20 residues, 1 to 20, serve as a signal peptide directing secretion; the sequence is MVPKADSGAFLLLFLLVLTV. Residues 21 to 349 are Extracellular-facing; it reads TEPLRPELRC…LFDSMASGMR (329 aa). Residues 28–68 enclose the LDL-receptor class A domain; that stretch reads LRCNPGQFACRSGTIQCIPLPWQCDGWATCEDESDEANCPE. 3 disulfides stabilise this stretch: C30/C44, C37/C57, and C51/C66. Positions 69-92 are disordered; sequence VTGEVRPHHGKEAVDPRQGRARGG. Positions 71 to 92 are enriched in basic and acidic residues; that stretch reads GEVRPHHGKEAVDPRQGRARGG. The region spanning 115 to 241 is the C-type lectin domain; it reads CPTGWHHYEG…FCAQLQCFHF (127 aa). 2 disulfide bridges follow: C145–C265 and C233–C257. Residues N149 and N196 are each glycosylated (N-linked (GlcNAc...) asparagine). Residues 270 to 333 enclose the VWFC domain; sequence TCVDIKDNVV…PKECCKFMCL (64 aa). A helical transmembrane segment spans residues 350–368; sequence LVVSCISSFLILSLLLFMV. At 369 to 550 the chain is on the cytoplasmic side; sequence HRLRQRRRER…HSRSSLNTVV (182 aa). S381 carries the phosphoserine modification. The disordered stretch occupies residues 500–550; it reads AGASLADLEDSADSSSALLVPPDPAQSGSTPAAEALPGGGRHSRSSLNTVV.

As to expression, predominantly expressed in brain, heart, lung and fetal kidney. Low levels in liver and adult kidney.

Its subcellular location is the membrane. Its function is as follows. Putative adhesion receptor, that could be involved in cell-cell or cell-matrix interactions required for normal cell differentiation and migration. The polypeptide is Integral membrane protein DGCR2/IDD (DGCR2) (Homo sapiens (Human)).